A 565-amino-acid polypeptide reads, in one-letter code: NAD-dependent malic enzyme (565 aa).

Catalysis depends on tyrosine 104, which acts as the Proton donor. An NAD(+)-binding site is contributed by arginine 157. Lysine 175 serves as the catalytic Proton acceptor. A divalent metal cation contacts are provided by glutamate 246, aspartate 247, and aspartate 270. NAD(+) is bound by residues aspartate 270 and asparagine 418.

This sequence belongs to the malic enzymes family. Homotetramer. Mg(2+) is required as a cofactor. It depends on Mn(2+) as a cofactor.

It catalyses the reaction (S)-malate + NAD(+) = pyruvate + CO2 + NADH. It carries out the reaction oxaloacetate + H(+) = pyruvate + CO2. This is NAD-dependent malic enzyme from Salmonella agona (strain SL483).